The chain runs to 81 residues: Adipogenin (81 aa).

The chain crosses the membrane as a helical span at residues 16 to 36; that stretch reads FLVFWLCLPVALLLFLLIIWL.

This sequence belongs to the adipogenin family. In terms of tissue distribution, highly expressed in subcutaneous, perirenal and mesecentric adipose tissue.

Its subcellular location is the membrane. It is found in the nucleus. Plays a role in stimulating adipocyte differentiation and development. This chain is Adipogenin, found in Bos taurus (Bovine).